The primary structure comprises 279 residues: ATP synthase gamma chain (279 aa).

It belongs to the ATPase gamma chain family. In terms of assembly, F-type ATPases have 2 components, CF(1) - the catalytic core - and CF(0) - the membrane proton channel. CF(1) has five subunits: alpha(3), beta(3), gamma(1), delta(1), epsilon(1). CF(0) has three main subunits: a, b and c.

It localises to the cell membrane. In terms of biological role, produces ATP from ADP in the presence of a proton gradient across the membrane. The gamma chain is believed to be important in regulating ATPase activity and the flow of protons through the CF(0) complex. The protein is ATP synthase gamma chain of Mycoplasmopsis pulmonis (strain UAB CTIP) (Mycoplasma pulmonis).